The primary structure comprises 125 residues: Translation initiation factor 5A (125 aa).

Lys-35 is modified (hypusine).

Belongs to the eIF-5A family.

It is found in the cytoplasm. Its function is as follows. Functions by promoting the formation of the first peptide bond. The polypeptide is Translation initiation factor 5A (eIF5A) (Methanoregula boonei (strain DSM 21154 / JCM 14090 / 6A8)).